An 820-amino-acid polypeptide reads, in one-letter code: MVRVIIKGGVWKNTEDEILKAAISKYGKNQWARISSLLVRKTPKQCKARWYEWLDPSIKKTEWSKEEDEKLLHLAKLMPTQWRTIAPLVGRTANHCLERYQKLLDQAEAQDNQATSSSLGLIGTGEAVPSADDVRRLRPGEIDPDPETKPARPDPIDMDEDEKEMLSEARARLANTQGKKAKRKARERALEQSRRLAMLQKRRELKAAGITIKQKPKKGSVDYNADVPFEKKPLPGFYDTSAETSKSYKAPIGKTLQELNNRNAGPEDATKSKRQREAEEKNKQAKQPIAGPSDEHIRKLKEADQITKRRKLNLPAAQVGQDELEAIVKIGLAGERARFLVQDGSSDATDSLLENYSALDSAKATRTPQLAAHEDSVMREANHLRLISSMQTPLLGDVNVDLQSSKSSGIQTPGSFVPQTPNPLLTPGLRNGQTPASASDSRLHADTSTPQRTPLRDNLGLNVDDSFQAGHETPRELKRARSLAQSHLRQSLSSLPAPKNDFDIVVDEQDVELQANSSSRLDNEPAMSEEDAAERDARLARQAAEEEARSEARRSQVVRRNLPRPAQVDLSRLHNQIDSRYRDRVELLVARETAQLLHHDANVHPIAGGKHPEPEAVQFDTLSDTSLITARELMRKELAEQLGFPGANQEALKRMVAASLNDDEEGMQRLEDALKQQWYEARNNKSQLVEQLEVTRAKMARIASQAAKGEKMLTKVLGGYQARSVALLNSTKEQFKALQEAAISRETFEYLGRGEQCGKADRLDSLRKEVESLARRESMAQTAYKLLAEERSTLQEHCEMLEMELLMRQAESLNEANLSA.

HTH myb-type domains lie at 3-58 (RVII…DPSI) and 59-108 (KKTE…DQAE). DNA-binding regions (H-T-H motif) lie at residues 31 to 54 (WARI…YEWL) and 82 to 104 (WRTI…QKLL). Disordered regions lie at residues 114 to 162 (ATSS…DEDE), 248 to 294 (YKAP…GPSD), 405 to 476 (SKSS…TPRE), and 514 to 560 (QANS…VVRR). Basic and acidic residues predominate over residues 132–155 (DDVRRLRPGEIDPDPETKPARPDP). Positions 160–205 (EDEKEMLSEARARLANTQGKKAKRKARERALEQSRRLAMLQKRREL) form a coiled coil. The segment covering 268–283 (DATKSKRQREAEEKNK) has biased composition (basic and acidic residues). Polar residues-rich tracts occupy residues 405–423 (SKSS…TPNP) and 431–452 (NGQT…TPQR). Coiled coils occupy residues 526–562 (AMSE…RRNL) and 761–805 (DRLD…EMEL). The span at 534 to 554 (ERDARLARQAAEEEARSEARR) shows a compositional bias: basic and acidic residues.

It belongs to the CEF1 family. In terms of assembly, associated with the spliceosome.

It localises to the cytoplasm. The protein resides in the nucleus. In terms of biological role, involved in pre-mRNA splicing and cell cycle control. In Mycosarcoma maydis (Corn smut fungus), this protein is Pre-mRNA-splicing factor CEF1 (CEF1).